Here is a 1486-residue protein sequence, read N- to C-terminus: Chromosome partition protein MukB (1486 aa).

An ATP-binding site is contributed by 34 to 41 (GGNGAGKS). 3 coiled-coil regions span residues 326-418 (LEAD…QYNQ), 444-480 (LETFQAKELEATEKMLSLEQKMSMAQTAHSQFEQAYQ), and 509-603 (RHLA…RAPV). The tract at residues 666 to 783 (PGGSEDQRLN…EVPLFGRAAR (118 aa)) is flexible hinge. Coiled-coil stretches lie at residues 835 to 923 (EAEI…AKLE), 977 to 1115 (EMLS…TAKA), and 1209 to 1265 (VEAI…LQSV).

It belongs to the SMC family. MukB subfamily. In terms of assembly, homodimerization via its hinge domain. Binds to DNA via its C-terminal region. Interacts, and probably forms a ternary complex, with MukE and MukF via its C-terminal region. The complex formation is stimulated by calcium or magnesium. Interacts with tubulin-related protein FtsZ.

It is found in the cytoplasm. It localises to the nucleoid. In terms of biological role, plays a central role in chromosome condensation, segregation and cell cycle progression. Functions as a homodimer, which is essential for chromosome partition. Involved in negative DNA supercoiling in vivo, and by this means organize and compact chromosomes. May achieve or facilitate chromosome segregation by condensation DNA from both sides of a centrally located replisome during cell division. The protein is Chromosome partition protein MukB of Escherichia coli O7:K1 (strain IAI39 / ExPEC).